We begin with the raw amino-acid sequence, 446 residues long: Indoleacetamide hydrolase (446 aa).

Residues Lys71 and Ser146 each act as charge relay system in the active site. Ser170 functions as the Acyl-ester intermediate in the catalytic mechanism.

It belongs to the amidase family.

The protein operates within plant hormone metabolism; auxin biosynthesis. Hydrolyzes indole-3-acetamide (IAM) into indole-3-acetic acid (IAA). This chain is Indoleacetamide hydrolase (iaaH), found in Pseudomonas syringae pv. syringae.